We begin with the raw amino-acid sequence, 542 residues long: Chaperonin GroEL 2 (542 aa).

ATP-binding positions include 30–33, Lys51, 87–91, Gly415, and Asp496; these read TLGP and DGTTT. The interval 523–542 is disordered; that stretch reads AEKPKKDGQPQMPPAPGMDF. Positions 533–542 are enriched in pro residues; that stretch reads QMPPAPGMDF.

It belongs to the chaperonin (HSP60) family. In terms of assembly, forms a cylinder of 14 subunits composed of two heptameric rings stacked back-to-back. Interacts with the co-chaperonin GroES.

The protein resides in the cytoplasm. It catalyses the reaction ATP + H2O + a folded polypeptide = ADP + phosphate + an unfolded polypeptide.. Functionally, together with its co-chaperonin GroES, plays an essential role in assisting protein folding. The GroEL-GroES system forms a nano-cage that allows encapsulation of the non-native substrate proteins and provides a physical environment optimized to promote and accelerate protein folding. The polypeptide is Chaperonin GroEL 2 (Sinorhizobium medicae (strain WSM419) (Ensifer medicae)).